The chain runs to 320 residues: Cytochrome f (320 aa).

The signal sequence occupies residues 1–35; it reads MQTRKTLSWIKEEITRSISVSLMIYIITGAYISNA. Residues Tyr-36, Cys-56, Cys-59, and His-60 each coordinate heme. The chain crosses the membrane as a helical span at residues 286–306; it reads VQGLLFFLASVILAQIFLVLK.

The protein belongs to the cytochrome f family. The 4 large subunits of the cytochrome b6-f complex are cytochrome b6, subunit IV (17 kDa polypeptide, petD), cytochrome f and the Rieske protein, while the 4 small subunits are PetG, PetL, PetM and PetN. The complex functions as a dimer. The cofactor is heme.

Its subcellular location is the plastid. The protein resides in the chloroplast thylakoid membrane. In terms of biological role, component of the cytochrome b6-f complex, which mediates electron transfer between photosystem II (PSII) and photosystem I (PSI), cyclic electron flow around PSI, and state transitions. The protein is Cytochrome f of Populus alba (White poplar).